A 358-amino-acid chain; its full sequence is Peptide chain release factor 1 (358 aa).

At Q233 the chain carries N5-methylglutamine.

Belongs to the prokaryotic/mitochondrial release factor family. In terms of processing, methylated by PrmC. Methylation increases the termination efficiency of RF1.

The protein localises to the cytoplasm. Functionally, peptide chain release factor 1 directs the termination of translation in response to the peptide chain termination codons UAG and UAA. The chain is Peptide chain release factor 1 from Staphylococcus aureus (strain MSSA476).